The sequence spans 354 residues: Uroporphyrinogen decarboxylase (354 aa).

Substrate contacts are provided by residues 27–31, Asp77, Tyr154, Ser209, and His327; that span reads RQAGR.

The protein belongs to the uroporphyrinogen decarboxylase family. Homodimer.

It localises to the cytoplasm. It carries out the reaction uroporphyrinogen III + 4 H(+) = coproporphyrinogen III + 4 CO2. It participates in porphyrin-containing compound metabolism; protoporphyrin-IX biosynthesis; coproporphyrinogen-III from 5-aminolevulinate: step 4/4. Functionally, catalyzes the decarboxylation of four acetate groups of uroporphyrinogen-III to yield coproporphyrinogen-III. This Pseudoalteromonas translucida (strain TAC 125) protein is Uroporphyrinogen decarboxylase.